The primary structure comprises 299 residues: Nitrogenase iron protein (299 aa).

8 to 15 contacts ATP; that stretch reads GKGGIGKS. Position 96 (C96) interacts with [4Fe-4S] cluster. R99 is modified (ADP-ribosylarginine; by dinitrogenase reductase ADP-ribosyltransferase). C130 contacts [4Fe-4S] cluster.

The protein belongs to the NifH/BchL/ChlL family. As to quaternary structure, homodimer. [4Fe-4S] cluster is required as a cofactor. In terms of processing, the reversible ADP-ribosylation of Arg-99 inactivates the nitrogenase reductase and regulates nitrogenase activity.

The catalysed reaction is N2 + 8 reduced [2Fe-2S]-[ferredoxin] + 16 ATP + 16 H2O = H2 + 8 oxidized [2Fe-2S]-[ferredoxin] + 2 NH4(+) + 16 ADP + 16 phosphate + 6 H(+). Functionally, the key enzymatic reactions in nitrogen fixation are catalyzed by the nitrogenase complex, which has 2 components: the iron protein and the molybdenum-iron protein. The chain is Nitrogenase iron protein from Gloeothece citriformis (strain PCC 7424) (Cyanothece sp. (strain PCC 7424)).